Consider the following 96-residue polypeptide: Acylphosphatase (96 aa).

The 88-residue stretch at 9-96 (CAEIYVSGRV…DTFTDFFIKR (88 aa)) folds into the Acylphosphatase-like domain. Active-site residues include arginine 24 and asparagine 42.

Belongs to the acylphosphatase family.

It carries out the reaction an acyl phosphate + H2O = a carboxylate + phosphate + H(+). The protein is Acylphosphatase (acyP) of Methanococcoides burtonii (strain DSM 6242 / NBRC 107633 / OCM 468 / ACE-M).